The primary structure comprises 316 residues: Thymidylate synthase (316 aa).

DUMP is bound by residues Arg-23 and 178 to 179; that span reads RR. Catalysis depends on Cys-198, which acts as the Nucleophile. DUMP is bound by residues 218 to 221, Asn-229, and 259 to 261; these read RSGD and HIY. Asp-221 is a binding site for (6R)-5,10-methylene-5,6,7,8-tetrahydrofolate. Ala-315 serves as a coordination point for (6R)-5,10-methylene-5,6,7,8-tetrahydrofolate.

Belongs to the thymidylate synthase family. Bacterial-type ThyA subfamily. Homodimer.

The protein localises to the cytoplasm. The enzyme catalyses dUMP + (6R)-5,10-methylene-5,6,7,8-tetrahydrofolate = 7,8-dihydrofolate + dTMP. It participates in pyrimidine metabolism; dTTP biosynthesis. Catalyzes the reductive methylation of 2'-deoxyuridine-5'-monophosphate (dUMP) to 2'-deoxythymidine-5'-monophosphate (dTMP) while utilizing 5,10-methylenetetrahydrofolate (mTHF) as the methyl donor and reductant in the reaction, yielding dihydrofolate (DHF) as a by-product. This enzymatic reaction provides an intracellular de novo source of dTMP, an essential precursor for DNA biosynthesis. In Latilactobacillus sakei subsp. sakei (strain 23K) (Lactobacillus sakei subsp. sakei), this protein is Thymidylate synthase.